Here is a 627-residue protein sequence, read N- to C-terminus: Chaperone protein HtpG (627 aa).

Residues 1-343 form an a; substrate-binding region; it reads MATQEFQAET…SEDLSLNISR (343 aa). The interval 344 to 553 is b; that stretch reads EMLQQDKQLK…EGEISIEMEK (210 aa). A c region spans residues 554–627; it reads VLQSMPNNQN…YTNNVCKIMS (74 aa).

It belongs to the heat shock protein 90 family. Homodimer.

It localises to the cytoplasm. Its function is as follows. Molecular chaperone. Has ATPase activity. The polypeptide is Chaperone protein HtpG (Natranaerobius thermophilus (strain ATCC BAA-1301 / DSM 18059 / JW/NM-WN-LF)).